The chain runs to 657 residues: MSSPSKAIELQLQMKQNAEELQDFMRDLENWEKDIKQTDAKLRNQTGVDSQILPPIRNKDFKKKKKSKSKPPLEKKSQEDEIKPKKKLLDYEYWDKLDVDRALEDIDKDNNESSSESECGDEDGITVDTEKALLEKEKGNNYFKSGQYDEAIECYTRGMDADPYNAVLPTNRASAFFRLKKYAVAESDCNLAIALNHNYAKAYARRGAARLALKDLQGAKEDYEKVLELDVNNFEAKNELRKINKELQSSTSDVQEKEAIEEKITVENEEEKKQIEIQQRKQQAIMQKDLGNAYFKEGKYEIAIDCYSQGMEADTTNALLPANRAMAYLKIQKYKEAETDCTLAISLDASYCKAFARRGTARIMLGKQKEAKEDFEMVLKLDPGNKQAVLELEKISRELRSNEKDTKGNKERKLINAVEKLPHQRSTKPLRRMVIEEVGGPVESCISSLNESNHGKADSMDLITKADKQDLNEEQNFCSLPDVPSAKVPKIEEISDTYGSCEPSSGEEHSVSQPSPPKIEKVVTTFSESLNIGIPVVPTNSFQLESDFRRLKGNPDLLYRYLKQIEPSFYGKLFQKALDPDLFSEILTILREQYINKDSCDLIFEILQRLSELKRFDMAVMFLSGSDRNNAHILFSHLEQSLKGSVSLNALKKKYGL.

The interval 39-82 (DAKLRNQTGVDSQILPPIRNKDFKKKKKSKSKPPLEKKSQEDEI) is disordered. Basic residues predominate over residues 60–69 (DFKKKKKSKS). Basic and acidic residues predominate over residues 71–82 (PPLEKKSQEDEI). TPR repeat units lie at residues 132-165 (ALLEKEKGNNYFKSGQYDEAIECYTRGMDADPYN), 167-199 (VLPTNRASAFFRLKKYAVAESDCNLAIALNHNY), 200-233 (AKAYARRGAARLALKDLQGAKEDYEKVLELDVNN), 284-317 (AIMQKDLGNAYFKEGKYEIAIDCYSQGMEADTTN), 319-351 (LLPANRAMAYLKIQKYKEAETDCTLAISLDASY), 352-385 (CKAFARRGTARIMLGKQKEAKEDFEMVLKLDPGN), and 503-536 (PSSGEEHSVSQPSPPKIEKVVTTFSESLNIGIPV). The interval 496–517 (DTYGSCEPSSGEEHSVSQPSPP) is disordered.

It belongs to the RPAP3 family.

In terms of biological role, may for an interface between the RNA polymerase II enzyme and chaperone/scaffolding protein. This Xenopus tropicalis (Western clawed frog) protein is RNA polymerase II-associated protein 3 (rpap3).